The chain runs to 473 residues: Photosystem II CP43 reaction center protein (473 aa).

The propeptide occupies 1 to 14; that stretch reads MKTLYSPRRFYPVE. Threonine 15 carries the N-acetylthreonine modification. Threonine 15 is modified (phosphothreonine). A run of 5 helical transmembrane segments spans residues 69-93, 134-155, 178-200, 255-275, and 291-312; these read LFEV…PHLA, LLGP…KDRN, KALY…RKIS, KPFA…LSYS, and WFNN…ASQA. Residue glutamate 367 participates in [CaMn4O5] cluster binding. The helical transmembrane segment at 447-471 threads the bilayer; that stretch reads RARAAAAGFEKGIDRDLEPVLFMTP.

Belongs to the PsbB/PsbC family. PsbC subfamily. As to quaternary structure, PSII is composed of 1 copy each of membrane proteins PsbA, PsbB, PsbC, PsbD, PsbE, PsbF, PsbH, PsbI, PsbJ, PsbK, PsbL, PsbM, PsbT, PsbX, PsbY, PsbZ, Psb30/Ycf12, at least 3 peripheral proteins of the oxygen-evolving complex and a large number of cofactors. It forms dimeric complexes. Binds multiple chlorophylls and provides some of the ligands for the Ca-4Mn-5O cluster of the oxygen-evolving complex. It may also provide a ligand for a Cl- that is required for oxygen evolution. PSII binds additional chlorophylls, carotenoids and specific lipids. serves as cofactor.

It is found in the plastid. Its subcellular location is the chloroplast thylakoid membrane. One of the components of the core complex of photosystem II (PSII). It binds chlorophyll and helps catalyze the primary light-induced photochemical processes of PSII. PSII is a light-driven water:plastoquinone oxidoreductase, using light energy to abstract electrons from H(2)O, generating O(2) and a proton gradient subsequently used for ATP formation. The protein is Photosystem II CP43 reaction center protein of Ranunculus macranthus (Large buttercup).